The following is a 175-amino-acid chain: 3-hydroxydecanoyl-[acyl-carrier-protein] dehydratase (175 aa).

H74 is a catalytic residue.

It belongs to the thioester dehydratase family. FabA subfamily. In terms of assembly, homodimer.

It localises to the cytoplasm. It carries out the reaction a (3R)-hydroxyacyl-[ACP] = a (2E)-enoyl-[ACP] + H2O. It catalyses the reaction (3R)-hydroxydecanoyl-[ACP] = (2E)-decenoyl-[ACP] + H2O. The enzyme catalyses (2E)-decenoyl-[ACP] = (3Z)-decenoyl-[ACP]. It participates in lipid metabolism; fatty acid biosynthesis. Its function is as follows. Necessary for the introduction of cis unsaturation into fatty acids. Catalyzes the dehydration of (3R)-3-hydroxydecanoyl-ACP to E-(2)-decenoyl-ACP and then its isomerization to Z-(3)-decenoyl-ACP. Can catalyze the dehydratase reaction for beta-hydroxyacyl-ACPs with saturated chain lengths up to 16:0, being most active on intermediate chain length. This chain is 3-hydroxydecanoyl-[acyl-carrier-protein] dehydratase, found in Alcanivorax borkumensis (strain ATCC 700651 / DSM 11573 / NCIMB 13689 / SK2).